The sequence spans 320 residues: Probable carboxylesterase M8 (320 aa).

The Involved in the stabilization of the negatively charged intermediate by the formation of the oxyanion hole motif lies at 52 to 54 (HGG). Active-site residues include Ser137 and His296.

The protein belongs to the 'GDXG' lipolytic enzyme family.

The catalysed reaction is a carboxylic ester + H2O = an alcohol + a carboxylate + H(+). Its pathway is secondary metabolite biosynthesis. Functionally, probable carboxylesterase; part of the gene cluster that mediates the biosynthesis of squalestatin S1 (SQS1, also known as zaragozic acid A), a heavily oxidized fungal polyketide that offers potent cholesterol lowering activity by targeting squalene synthase (SS). SQS1 is composed of a 2,8-dioxobicyclic[3.2.1]octane-3,4,5-tricarboxyclic acid core that is connected to two lipophilic polyketide arms. These initial steps feature the priming of an unusual benzoic acid starter unit onto the highly reducing polyketide synthase pks2, followed by oxaloacetate extension and product release to generate a tricarboxylic acid containing product. The phenylalanine ammonia lyase (PAL) M7 and the acyl-CoA ligase M9 are involved in transforming phenylalanine into benzoyl-CoA. The citrate synthase-like protein R3 is involved in connecting the C-alpha-carbons of the hexaketide chain and oxaloacetate to afford the tricarboxylic acid unit. The potential hydrolytic enzymes, M8 and M10, are in close proximity to pks2 and may participate in product release. On the other side, the tetraketide arm is synthesized by a the squalestatin tetraketide synthase pks1 and enzymatically esterified to the core in the last biosynthetic step, by the acetyltransferase M4. The biosynthesis of the tetraketide must involve 3 rounds of chain extension. After the first and second rounds methyl-transfer occurs, and in all rounds of extension the ketoreductase and dehydratase are active. The enoyl reductase and C-MeT of pks1 are not active in the final round of extension. The acetyltransferase M4 appears to have a broad substrate selectivity for its acyl CoA substrate, allowing the in vitro synthesis of novel squalestatins. The biosynthesis of SQS1 requires several oxidative steps likely performed by oxidoreductases M1, R1 and R2. Finally, in support of the identification of the cluster as being responsible for SQS1 production, the cluster contains a gene encoding a putative squalene synthase (SS) R6, suggesting a likely mechanism for self-resistance. This is Probable carboxylesterase M8 from Phoma sp. (strain ATCC 20986 / MF5453).